The sequence spans 443 residues: Ribulose bisphosphate carboxylase large chain (443 aa).

The substrate site is built by N89 and T139. K141 (proton acceptor) is an active-site residue. Position 143 (K143) interacts with substrate. 3 residues coordinate Mg(2+): K167, D169, and E170. K167 carries the N6-carboxylysine modification. H260 functions as the Proton acceptor in the catalytic mechanism. Substrate is bound by residues R261, H293, and S345.

Belongs to the RuBisCO large chain family. Type I subfamily. As to quaternary structure, heterohexadecamer of 8 large chains and 8 small chains; disulfide-linked. The disulfide link is formed within the large subunit homodimers. It depends on Mg(2+) as a cofactor. The disulfide bond which can form in the large chain dimeric partners within the hexadecamer appears to be associated with oxidative stress and protein turnover.

The protein resides in the plastid. The protein localises to the chloroplast. The catalysed reaction is 2 (2R)-3-phosphoglycerate + 2 H(+) = D-ribulose 1,5-bisphosphate + CO2 + H2O. The enzyme catalyses D-ribulose 1,5-bisphosphate + O2 = 2-phosphoglycolate + (2R)-3-phosphoglycerate + 2 H(+). Functionally, ruBisCO catalyzes two reactions: the carboxylation of D-ribulose 1,5-bisphosphate, the primary event in carbon dioxide fixation, as well as the oxidative fragmentation of the pentose substrate in the photorespiration process. Both reactions occur simultaneously and in competition at the same active site. The polypeptide is Ribulose bisphosphate carboxylase large chain (Antirrhinum majus (Garden snapdragon)).